A 225-amino-acid chain; its full sequence is Uracil-DNA glycosylase (225 aa).

The active-site Proton acceptor is aspartate 65.

Belongs to the uracil-DNA glycosylase (UDG) superfamily. UNG family.

The protein resides in the cytoplasm. The enzyme catalyses Hydrolyzes single-stranded DNA or mismatched double-stranded DNA and polynucleotides, releasing free uracil.. Its function is as follows. Excises uracil residues from the DNA which can arise as a result of misincorporation of dUMP residues by DNA polymerase or due to deamination of cytosine. This chain is Uracil-DNA glycosylase, found in Bacillus anthracis (strain A0248).